A 206-amino-acid chain; its full sequence is Small ribosomal subunit protein uS4 (206 aa).

The region spanning 96-156 (TRLDNVVYRM…EKSRTQARIK (61 aa)) is the S4 RNA-binding domain.

This sequence belongs to the universal ribosomal protein uS4 family. In terms of assembly, part of the 30S ribosomal subunit. Contacts protein S5. The interaction surface between S4 and S5 is involved in control of translational fidelity.

In terms of biological role, one of the primary rRNA binding proteins, it binds directly to 16S rRNA where it nucleates assembly of the body of the 30S subunit. With S5 and S12 plays an important role in translational accuracy. In Shewanella amazonensis (strain ATCC BAA-1098 / SB2B), this protein is Small ribosomal subunit protein uS4.